The chain runs to 440 residues: MESQQLSNYPHISHGSACASVTSKEVHTNQDPLDVSASKIQEYDKASTKANSQQTTTPASSAVPENPHHASPQPASVPPPQNGPYPQQCMMTQNQANPSGWSFYGHPSMIPYTPYQMSPMYFPPGPQSQFPQYPSSVGTPLSTPSPESGNTFTDSSSADSDMTSTKKYVRPPPMLTSPNDFPNWVKTYIKFLQNSNLGGIIPTVNGKPVRPITDDELTFLYNTFQIFAPSQFLPTWVKDILSVDYTDIMKILSKSIEKMQSDTQEANDIVTLANLQYNGSTPADAFETKVTNIIDRLNNNGIHINNKVACQLIMRGLSGEYKFLRYTRHRHLNMTVAELFLDIHAIYEEQQGSRNSKPNYRRNPSDEKNDSRSYTNTTKPKVIARNPQKTNNSKSKTARAHNVSTSNNSPSTDNDSISKSTTEPIQLNNKHDLHLRPETY.

Composition is skewed to polar residues over residues 1–10 (MESQQLSNYP), 48–60 (TKAN…TPAS), and 127–152 (QSQF…GNTF). Disordered stretches follow at residues 1–93 (MESQ…MMTQ), 126–173 (PQSQ…RPPP), and 352–440 (GSRN…PETY). Low complexity predominate over residues 153 to 165 (TDSSSADSDMTST). An RNA-binding region spans residues 299-401 (NNGIHINNKV…NSKSKTARAH (103 aa)). A compositionally biased stretch (low complexity) spans 402 to 418 (NVSTSNNSPSTDNDSIS). Phosphoserine is present on Ser416. Residues 419-428 (KSTTEPIQLN) show a composition bias toward polar residues. Residues 429–440 (NKHDLHLRPETY) are compositionally biased toward basic and acidic residues.

In terms of assembly, homotrimer.

Its subcellular location is the cytoplasm. Capsid protein (CA) is the structural component of the virus-like particle (VLP), forming the shell that encapsulates the retrotransposons dimeric RNA genome. The particles are assembled from trimer-clustered units and there are holes in the capsid shells that allow for the diffusion of macromolecules. CA also has nucleocapsid-like chaperone activity, promoting primer tRNA(i)-Met annealing to the multipartite primer-binding site (PBS), dimerization of Ty1 RNA and initiation of reverse transcription. The protein is Transposon Ty1-PR2 Gag polyprotein (TY1A-PR2) of Saccharomyces cerevisiae (strain ATCC 204508 / S288c) (Baker's yeast).